The chain runs to 329 residues: uncharacterized protein (329 aa).

The disordered stretch occupies residues 1–20 (MGESTTQPAGGAAVDDETRS).

This is an uncharacterized protein from Mycobacterium tuberculosis (strain CDC 1551 / Oshkosh).